Reading from the N-terminus, the 533-residue chain is MAIPQSCTVLVAGGGPGGSYTAAALAREGVDVVLLEADCHPRYHIGESLLPSMRYLLRFIDLEDTFEQHGFQKKLGAFFKLNAKSAGYTDFIRANGPNGYSWNVVRSESDEILFRHATKSGAKTFENVSLKSVNFEPYENDKFTSQDKLTNPGRPVSAEWKTKDGCSGTISFDYLVDATGRVGILSTKYLKNRKFNESFRNIAMWGYFKGNIPPSPGTDRENQPISEGMRDGSGWVWMLPLHNGTVSIGAVVRKDIFQAKKKALPEGTTEAQTLASLVALCPTISSYLEPAELASGIRQAADYSYSANAYAGPNFRIVGDAGCFIDPFFSSGHHLALSSALAAATSINACIRGDCNEFDASRWFAKKVDEGYTLFLVVVMAALKQIRMQEQPILSDLDEEGFDRAFTILRPVIQGAADKETAPKAKGESITETIDLCLTALNDLHDTELQRKLTSIVEAKGTPEQEQLLGKLSPDETAALHRMRAMHSILPMGELEDFENSNIDGFKARLEKGSLGLRRERALCRDHAGDLQM.

The FAD site is built by G14, G17, and E47. Chloride contacts are provided by S331 and G332.

It belongs to the flavin-dependent halogenase family.

It carries out the reaction griseophenone C + FADH2 + chloride + O2 = griseophenone B + FAD + 2 H2O + H(+). Its pathway is secondary metabolite biosynthesis; terpenoid biosynthesis. In terms of biological role, flavin-dependent halogenase; part of the gene cluster that mediates the biosynthesis of griseofulvin, an important antifungal drug that has been in use for a long time for treating dermatophyte infections. The first step of the pathway is the formation of the heptaketide backbone by gsfA which is initiated by priming with acetyl-CoA, followed by sequential condensations of 6 malonyl-CoA units. The resulting benzophenone can undergo a spontaneous dehydration to form norlichexanthone. However, the true precursor for the griseofulvin biosynthesis is not norlichexanthone, but the heptaketide benzophenone that is O-methylated at 3-OH by gsfB to produce griseophenone D which is further methylated at 9-OH by gsfC to yield griseophenone C. Griseophenone C is then substrate of halogenase gsfI which is responsible for the regio-specific chlorination at the C13 position to form griseophenone B. The cytochrome P450 gsfF catalyzes the coupling of orcinol and phloroglucinol rings in griseophenone B to form desmethyl-dehydrogriseofulvin A which is further methylated at 5-OH by gsfD to yield dehydrogriseofulvin. Finally, gsfE performs stereospecific reduction of enone 18 of dehydrogriseofulvin to afford the final product griseofulvin. This Penicillium aethiopicum protein is Flavin-dependent halogenase gsfI.